A 309-amino-acid polypeptide reads, in one-letter code: Probable RuBisCO transcriptional regulator (309 aa).

Positions 6–63 constitute an HTH lysR-type domain; it reads FTLDQLRILKAIVKEGSFKRAADSLYVSQPAISLQIQNLEKQLNIPLFERSNKKATLT. The segment at residues 23-42 is a DNA-binding region (H-T-H motif); the sequence is FKRAADSLYVSQPAISLQIQ.

Belongs to the LysR transcriptional regulatory family.

Its subcellular location is the plastid. The protein resides in the chloroplast. Functionally, trans-acting transcriptional regulator of RuBisCO genes (rbcL and rbcS) expression. The polypeptide is Probable RuBisCO transcriptional regulator (rbcR) (Gracilaria tenuistipitata var. liui (Red alga)).